The following is a 1472-amino-acid chain: Adhesion G protein-coupled receptor L1 (1472 aa).

The N-terminal stretch at 1-24 (MARLAAVLWSLCVTAILVTSATQG) is a signal peptide. Topologically, residues 25–857 (LSRAGLPFGL…EIYQGRINEL (833 aa)) are extracellular. Residues 40–129 (ACEGYPIELR…KYLEVQYDCV (90 aa)) form the SUEL-type lectin domain. Intrachain disulfides connect C41/C71, C50/C128, C83/C115, C96/C102, and C140/C322. Residue E42 coordinates alpha-L-rhamnose. Residue N98 is glycosylated (N-linked (GlcNAc...) asparagine). Residue 117-120 (GTYK) participates in alpha-L-rhamnose binding. One can recognise an Olfactomedin-like domain in the interval 139-398 (VCPGTLQKVL…VVRYSLEFGP (260 aa)). The segment at 400 to 468 (DPSAGPATSP…APAPSTRRPP (69 aa)) is disordered. A compositionally biased stretch (low complexity) spans 405–441 (PATSPPLSTTTTARPTPLTSTASPAATTPLRRAPLTT). Pro residues predominate over residues 453 to 468 (DLPPATAPAPSTRRPP). Intrachain disulfides connect C480–C515 and C503–C532. N-linked (GlcNAc...) asparagine glycosylation is found at N531, N640, N741, N800, N805, and N826. The GAIN-B domain maps to 669-850 (PARFLAAKQN…AVLMAHREIY (182 aa)). 2 disulfides stabilise this stretch: C801–C832 and C820–C834. Positions 801–850 (CSFWNYSERSMLGYWSTQGCRLVESNKTHTTCACSHLTNFAVLMAHREIY) are GPS. The chain crosses the membrane as a helical span at residues 858 to 878 (LLSVITWVGIVISLVCLAICI). Over 879–892 (STFCFLRGLQTDRN) the chain is Cytoplasmic. The helical transmembrane segment at 893–913 (TIHKNLCINLFLAELLFLVGI) threads the bilayer. Residues 914 to 919 (DKTQYE) are Extracellular-facing. A helical transmembrane segment spans residues 920–940 (IACPIFAGLLHYFFLAAFSWL). The Cytoplasmic segment spans residues 941-963 (CLEGVHLYLLLVEVFESEYSRTK). The helical transmembrane segment at 964-984 (YYYLGGYCFPALVVGIAAAID) threads the bilayer. At 985–1001 (YRSYGTEKACWLRVDNY) the chain is on the extracellular side. The helical transmembrane segment at 1002 to 1022 (FIWSFIGPVSFVIVVNLVFLM) threads the bilayer. Residues 1023–1049 (VTLHKMVRSSSVLKPDSSRLDNIKSWA) lie on the Cytoplasmic side of the membrane. A helical transmembrane segment spans residues 1050–1070 (LGAIALLFLLGLTWAFGLLFI). Residues 1071-1074 (NKES) are Extracellular-facing. Residues 1075-1095 (VVMAYLFTTFNAFQGVFIFVF) form a helical membrane-spanning segment. The Cytoplasmic portion of the chain corresponds to 1096–1472 (HCALQKKVHK…DGQMQLVTSL (377 aa)). Residue R1193 is modified to Omega-N-methylarginine. Position 1219 is a phosphoserine (S1219). Disordered regions lie at residues 1247–1271 (FNNS…PRGR), 1291–1325 (NLRG…GGPG), 1358–1427 (ESES…SRPP), and 1449–1472 (YLAA…VTSL). Composition is skewed to pro residues over residues 1301–1313 (GPPP…PPVP) and 1406–1418 (ALPP…PGPP). At S1471 the chain carries Phosphoserine.

It belongs to the G-protein coupled receptor 2 family. Adhesion G-protein coupled receptor (ADGR) subfamily. As to quaternary structure, forms a heterodimer, consisting of a large extracellular region (p120) non-covalently linked to a seven-transmembrane moiety (p85). Interacts with syntaxin and with proteins of the SHANK family via the PDZ domain. Interacts (via extracellular domain) with FLRT1, FLRT2 and FLRT3 (via extracellular domain). Autoproteolytically cleaved into 2 subunits, an extracellular subunit and a seven-transmembrane subunit. This proteolytic processing takes place early in the biosynthetic pathway, either in the endoplasmic reticulum or in the early compartment of the Golgi apparatus. As to expression, brain-specific expression but low levels are also detected in kidney, lung and spleen.

The protein resides in the cell membrane. It localises to the cell projection. It is found in the axon. Its subcellular location is the growth cone. The protein localises to the synapse. The protein resides in the presynaptic cell membrane. It localises to the synaptosome. Its function is as follows. Calcium-independent receptor of high affinity for alpha-latrotoxin, an excitatory neurotoxin present in black widow spider venom which triggers massive exocytosis from neurons and neuroendocrine cells. Receptor for TENM2 that mediates heterophilic synaptic cell-cell contact and postsynaptic specialization. Receptor probably implicated in the regulation of exocytosis. This Bos taurus (Bovine) protein is Adhesion G protein-coupled receptor L1.